Reading from the N-terminus, the 325-residue chain is NADH-quinone oxidoreductase subunit H (325 aa).

Helical transmembrane passes span 11 to 31 (VLIA…CGAL), 81 to 101 (MIFT…FAIV), 114 to 134 (IGIL…LFAG), 149 to 169 (ASAQ…GVVA), 186 to 206 (MWNV…GVAV), 237 to 257 (FFVG…TMFF), 265 to 285 (LPPF…FILI), and 304 to 324 (ICLP…LYNA).

This sequence belongs to the complex I subunit 1 family. NDH-1 is composed of 13 different subunits. Subunits NuoA, H, J, K, L, M, N constitute the membrane sector of the complex.

The protein resides in the cell inner membrane. The catalysed reaction is a quinone + NADH + 5 H(+)(in) = a quinol + NAD(+) + 4 H(+)(out). Its function is as follows. NDH-1 shuttles electrons from NADH, via FMN and iron-sulfur (Fe-S) centers, to quinones in the respiratory chain. The immediate electron acceptor for the enzyme in this species is believed to be ubiquinone. Couples the redox reaction to proton translocation (for every two electrons transferred, four hydrogen ions are translocated across the cytoplasmic membrane), and thus conserves the redox energy in a proton gradient. This subunit may bind ubiquinone. This is NADH-quinone oxidoreductase subunit H from Photorhabdus laumondii subsp. laumondii (strain DSM 15139 / CIP 105565 / TT01) (Photorhabdus luminescens subsp. laumondii).